A 305-amino-acid chain; its full sequence is MNTLLEISSLTPDDIESIFNITMQYFNNRSQNNKILNGKVVVNLFFESSTRTLSSFEIAEKSLGAHSITLNINTSSINKGESIIDTILNINAMNPDLIIIRSQYSQLVKTISQYVSNCCIINAGDGNHEHPTQALIDYCTIRYLKKNISNLNISICGDILHSRVARSNIRLLSRYGANISLIAPPTLACDLVGVSHIYHNLIDGIRDADVIMLLRLQKERITNCVIPSEEEYSHLYMLNSERLSYAKKDVIIMHPGPTNKGTEISNNVAENKSVILLQVKMGVAVRKAILHYLLYGNKCNTSNEI.

Carbamoyl phosphate-binding residues include Arg51 and Thr52. Lys79 provides a ligand contact to L-aspartate. Residues Arg101, His130, and Gln133 each coordinate carbamoyl phosphate. L-aspartate is bound by residues Arg163 and Arg215. Carbamoyl phosphate contacts are provided by Gly256 and Pro257.

This sequence belongs to the aspartate/ornithine carbamoyltransferase superfamily. ATCase family. As to quaternary structure, heterododecamer (2C3:3R2) of six catalytic PyrB chains organized as two trimers (C3), and six regulatory PyrI chains organized as three dimers (R2).

The catalysed reaction is carbamoyl phosphate + L-aspartate = N-carbamoyl-L-aspartate + phosphate + H(+). It participates in pyrimidine metabolism; UMP biosynthesis via de novo pathway; (S)-dihydroorotate from bicarbonate: step 2/3. Functionally, catalyzes the condensation of carbamoyl phosphate and aspartate to form carbamoyl aspartate and inorganic phosphate, the committed step in the de novo pyrimidine nucleotide biosynthesis pathway. The polypeptide is Aspartate carbamoyltransferase catalytic subunit (Ehrlichia canis (strain Jake)).